A 555-amino-acid polypeptide reads, in one-letter code: Heterochromatin protein 1-binding protein 3 (555 aa).

An N-acetylalanine modification is found at alanine 2. At serine 6 the chain carries Phosphoserine. The tract at residues 29–134 is disordered; it reads KLGEKVEDNT…KEKKVKKTIP (106 aa). Residue threonine 51 is modified to Phosphothreonine. Over residues 51–67 the composition is skewed to basic and acidic residues; sequence TPPKSKLAEGVEEKPEP. Lysine 64 participates in a covalent cross-link: Glycyl lysine isopeptide (Lys-Gly) (interchain with G-Cter in SUMO2). Threonine 85 bears the Phosphothreonine mark. Lysine 97 participates in a covalent cross-link: Glycyl lysine isopeptide (Lys-Gly) (interchain with G-Cter in SUMO2). Over residues 100 to 127 the composition is skewed to basic and acidic residues; it reads PENEEKEENKPSEETKKDEKDQSKEKEK. 3 positions are modified to phosphoserine: serine 142, serine 155, and serine 156. In terms of domain architecture, H15 1 spans 157-232; that stretch reads PRPKMDAILT…GASGSFVVVQ (76 aa). At lysine 190 the chain carries N6-acetyllysine. Residues 227 to 254 are disordered; that stretch reads SFVVVQKSRKPPQKSRNRKNRSSAVDPE. Basic residues predominate over residues 233-247; sequence KSRKPPQKSRNRKNR. Phosphoserine is present on residues serine 248 and serine 249. 2 H15 domains span residues 255–330 and 337–413; these read PQVK…QLKK and LGGS…QLCF. Lysine 258 is covalently cross-linked (Glycyl lysine isopeptide (Lys-Gly) (interchain with G-Cter in SUMO2)). Positions 422 to 555 are disordered; that stretch reads LFPKKEPDDS…TMKKSFKAKK (134 aa). A compositionally biased stretch (acidic residues) spans 430 to 452; that stretch reads DSKDEDEDEDEDDSSEEDSEDEE. Phosphoserine is present on residues serine 443, serine 444, and serine 448. Basic residues predominate over residues 491 to 512; that stretch reads GKTRPLPKKAPPKAKSPAKKAR. Positions 513-532 are enriched in low complexity; the sequence is PSPSVIKKPSGSSSKKPAAS. Residues 545 to 555 are compositionally biased toward basic residues; that stretch reads STMKKSFKAKK.

Interacts (via PxVxL motif) with CBX5.

It localises to the nucleus. Its subcellular location is the chromosome. Functionally, component of heterochromatin that maintains heterochromatin integrity during G1/S progression and regulates the duration of G1 phase to critically influence cell proliferative capacity. May play a role in hypoxia-induced oncogenesis. The sequence is that of Heterochromatin protein 1-binding protein 3 (HP1BP3) from Bos taurus (Bovine).